A 360-amino-acid chain; its full sequence is DNA replication and repair protein RecF (360 aa).

Residue 30–37 (GRNAQGKT) coordinates ATP.

This sequence belongs to the RecF family.

Its subcellular location is the cytoplasm. The RecF protein is involved in DNA metabolism; it is required for DNA replication and normal SOS inducibility. RecF binds preferentially to single-stranded, linear DNA. It also seems to bind ATP. The protein is DNA replication and repair protein RecF of Desulforudis audaxviator (strain MP104C).